Consider the following 1058-residue polypeptide: Leucine--tRNA ligase, cytoplasmic (1058 aa).

The 'HIGH' region signature appears at 48-58; it reads PYMNGRLHVGH. A 'KMSKS' region motif is present at residues 711-715; sequence KMSKS. Residue lysine 714 participates in ATP binding.

This sequence belongs to the class-I aminoacyl-tRNA synthetase family.

It localises to the cytoplasm. The catalysed reaction is tRNA(Leu) + L-leucine + ATP = L-leucyl-tRNA(Leu) + AMP + diphosphate. This Dictyostelium discoideum (Social amoeba) protein is Leucine--tRNA ligase, cytoplasmic (leuS).